The primary structure comprises 844 residues: Janus kinase and microtubule-interacting protein 3 (844 aa).

Positions 8–258 (SRAKGDKAEA…QLSQVREADR (251 aa)) form a coiled coil. The interval 250-290 (LSQVREADRHPGSPRRELPHAAGAGDASDHSGSPEQQLDEK) is disordered. Residues 254–268 (READRHPGSPRRELP) show a composition bias toward basic and acidic residues. The segment covering 269–282 (HAAGAGDASDHSGS) has biased composition (low complexity). Residues 289-421 (EKDARRFQLK…DELSKTLETA (133 aa)) are a coiled coil. Serine 384 carries the post-translational modification Phosphoserine. A compositionally biased stretch (polar residues) spans 466-483 (SDGSSVSYQTDRTDQTPC). A disordered region spans residues 466–489 (SDGSSVSYQTDRTDQTPCTPDDDL). 2 coiled-coil regions span residues 493-621 (MAKE…RERK) and 683-834 (VLTL…FLFL).

It belongs to the JAKMIP family. In terms of tissue distribution, specifically expressed in the CNS and endocrine tissues. Also detected in other tissues including heart, testis and prostate.

It localises to the golgi apparatus. This is Janus kinase and microtubule-interacting protein 3 (JAKMIP3) from Homo sapiens (Human).